The sequence spans 156 residues: Large ribosomal subunit protein uL22 (156 aa).

Belongs to the universal ribosomal protein uL22 family. Part of the 50S ribosomal subunit.

Its function is as follows. This protein binds specifically to 23S rRNA. It makes multiple contacts with different domains of the 23S rRNA in the assembled 50S subunit and ribosome. Functionally, the globular domain of the protein is located near the polypeptide exit tunnel on the outside of the subunit, while an extended beta-hairpin is found that lines the wall of the exit tunnel in the center of the 70S ribosome. This chain is Large ribosomal subunit protein uL22, found in Aeropyrum pernix (strain ATCC 700893 / DSM 11879 / JCM 9820 / NBRC 100138 / K1).